Here is a 492-residue protein sequence, read N- to C-terminus: PHO85 cyclin-8 (492 aa).

Disordered regions lie at residues 1–32 (MAND…DNDS), 143–163 (SGSG…GTGR), and 223–252 (KVNS…ENES). Residues 8–20 (NKSLINDALTRSM) are compositionally biased toward polar residues. A compositionally biased stretch (acidic residues) spans 23–32 (FYDDDDDNDS). Serine 32 bears the Phosphoserine mark.

This sequence belongs to the cyclin family. PHO80 subfamily. In terms of assembly, forms a cyclin-CDK complex with PHO85.

The protein resides in the cytoplasm. The protein localises to the nucleus. Cyclin partner of the cyclin-dependent kinase (CDK) PHO85. Together with cyclin PCL10, negatively controls glycogen accumulation under favorable growth conditions. Involved in phosphorylation and negative regulation of glycogen synthase GSY2. Also has minor GLC8 kinase activity. The protein is PHO85 cyclin-8 (PCL8) of Saccharomyces cerevisiae (strain ATCC 204508 / S288c) (Baker's yeast).